A 206-amino-acid chain; its full sequence is Uridine kinase (206 aa).

9–16 (GGSGSGKT) is an ATP binding site.

The protein belongs to the uridine kinase family.

Its subcellular location is the cytoplasm. It catalyses the reaction uridine + ATP = UMP + ADP + H(+). The catalysed reaction is cytidine + ATP = CMP + ADP + H(+). Its pathway is pyrimidine metabolism; CTP biosynthesis via salvage pathway; CTP from cytidine: step 1/3. It functions in the pathway pyrimidine metabolism; UMP biosynthesis via salvage pathway; UMP from uridine: step 1/1. The polypeptide is Uridine kinase (Borrelia hermsii (strain HS1 / DAH)).